The primary structure comprises 355 residues: MSLFDTINAGGSQLLGFAWPTVWAIVRILVVSVVILLCVAYLILWERKLIGWMHVRLGPNRVGPGGLLQPIADVLKLLLKEVIQPSAASRWLYLIAPVMTVVPAFAVWAVIPFQAEAVLANVNAGLLYAMAISSIGVYAVILAGWASNSKYAFLGAMRAAAQMVSYEISMGFALVLVLMTAGSLNLSEIVGSQQHGFFAGHGVNFLSWNWLPLLPAFVVYFISGIAETNRHPFDVVEGESEIVAGHMIDYSGMAFALFFLAEYINMIVISALTATLFLGGWDAPFEFLSFIPGIFWLVLKIFALLSVFIWVRATFPRFRYDQIMRLGWKVFLPVTVVWVVVVGFWMMSPLNIWVK.

The next 8 helical transmembrane spans lie at 25 to 45 (IVRI…LILW), 91 to 111 (WLYL…WAVI), 126 to 146 (LLYA…AGWA), 170 to 190 (MGFA…SEIV), 205 to 225 (FLSW…ISGI), 252 to 272 (GMAF…ISAL), 290 to 310 (FIPG…VFIW), and 330 to 350 (VFLP…MSPL).

Belongs to the complex I subunit 1 family. As to quaternary structure, NDH-1 is composed of 14 different subunits. Subunits NuoA, H, J, K, L, M, N constitute the membrane sector of the complex.

The protein resides in the cell inner membrane. The enzyme catalyses a quinone + NADH + 5 H(+)(in) = a quinol + NAD(+) + 4 H(+)(out). Its function is as follows. NDH-1 shuttles electrons from NADH, via FMN and iron-sulfur (Fe-S) centers, to quinones in the respiratory chain. The immediate electron acceptor for the enzyme in this species is believed to be ubiquinone. Couples the redox reaction to proton translocation (for every two electrons transferred, four hydrogen ions are translocated across the cytoplasmic membrane), and thus conserves the redox energy in a proton gradient. This subunit may bind ubiquinone. In Burkholderia lata (strain ATCC 17760 / DSM 23089 / LMG 22485 / NCIMB 9086 / R18194 / 383), this protein is NADH-quinone oxidoreductase subunit H.